The primary structure comprises 248 residues: Proteasome subunit alpha (248 aa).

This sequence belongs to the peptidase T1A family. In terms of assembly, the 20S proteasome core is composed of 14 alpha and 14 beta subunits that assemble into four stacked heptameric rings, resulting in a barrel-shaped structure. The two inner rings, each composed of seven catalytic beta subunits, are sandwiched by two outer rings, each composed of seven alpha subunits. The catalytic chamber with the active sites is on the inside of the barrel. Has a gated structure, the ends of the cylinder being occluded by the N-termini of the alpha-subunits. Is capped by the proteasome-associated ATPase, ARC.

It localises to the cytoplasm. It participates in protein degradation; proteasomal Pup-dependent pathway. With respect to regulation, the formation of the proteasomal ATPase ARC-20S proteasome complex, likely via the docking of the C-termini of ARC into the intersubunit pockets in the alpha-rings, may trigger opening of the gate for substrate entry. Interconversion between the open-gate and close-gate conformations leads to a dynamic regulation of the 20S proteasome proteolysis activity. Its function is as follows. Component of the proteasome core, a large protease complex with broad specificity involved in protein degradation. The protein is Proteasome subunit alpha of Mycobacterium tuberculosis (strain ATCC 25177 / H37Ra).